The sequence spans 269 residues: MSRFDTLFANLKAKNEGAFVPFVTLCDPDFDRSFEIIETLIANGADALELGFPFSDPLLDGSVIQAANKRALDGGYSTDACFEMIAKIRSKYPEIPIGLLLCANLVFVPTQCVFFNRCAESGVDAVLIADVPVLASEEFTQAAKKHGIQSVFICPPNADQVTIERIANLTEGYTYLVSRSGVTSAENQAHAKNLDNLIESLKRSNSAPILQGFGIAKPAQVKEALALGCDGAISGSAIVKIIERNLDSQTQLLSELAKFVSVMKAATKS.

Residues glutamate 49 and aspartate 60 each act as proton acceptor in the active site.

This sequence belongs to the TrpA family. In terms of assembly, tetramer of two alpha and two beta chains.

It catalyses the reaction (1S,2R)-1-C-(indol-3-yl)glycerol 3-phosphate + L-serine = D-glyceraldehyde 3-phosphate + L-tryptophan + H2O. It functions in the pathway amino-acid biosynthesis; L-tryptophan biosynthesis; L-tryptophan from chorismate: step 5/5. The alpha subunit is responsible for the aldol cleavage of indoleglycerol phosphate to indole and glyceraldehyde 3-phosphate. This chain is Tryptophan synthase alpha chain, found in Actinobacillus pleuropneumoniae serotype 7 (strain AP76).